The following is a 501-amino-acid chain: MAAASVTPPGSLELLQPGFSKTLLGTKLEAKYLCSACRNVLRRPFQAQCGHRYCSFCLASILSSGPQNCAACVHEGIYEEGISILESSSAFPDNAARREVESLPAVCPSDGCTWKGTLKEYESCHEGRCPLMLTECPACKGLVRLGEKERHLEHECPERSLSCRHCRAPCCGADVKAHHEVCPKFPLTCDGCGKKKIPREKFQDHVKTCGKCRVPCRFHAIGCLETVEGEKQQEHEVQWLREHLAMLLSSVLEAKPLLGDQSHAGSELLQRCESLEKKTATFENIVCVLNREVERVAMTAEACSRQHRLDQDKIEALSSKVQQLERSIGLKDLAMADLEQKVLEMEASTYDGVFIWKISDFARKRQEAVAGRIPAIFSPAFYTSRYGYKMCLRIYLNGDGTGRGTHLSLFFVVMKGPNDALLRWPFNQKVTLMLLDQNNREHVIDAFRPDVTSSSFQRPVNDMNIASGCPLFCPVSKMEAKNSYVRDDAIFIKAIVDLTGL.

Residue A2 is modified to N-acetylalanine. S5 is subject to Phosphoserine. T7 is subject to Phosphothreonine. A Phosphoserine modification is found at S11. The residue at position 22 (T22) is a Phosphothreonine. Residue K31 forms a Glycyl lysine isopeptide (Lys-Gly) (interchain with G-Cter in ubiquitin) linkage. An RING-type zinc finger spans residues 34–73 (CSACRNVLRRPFQAQCGHRYCSFCLASILSSGPQNCAACV). Position 117 is a phosphothreonine; by PKC (T117). 2 TRAF-type zinc fingers span residues 124 to 180 (CHEG…AHHE) and 177 to 233 (AHHE…EKQQ). Positions 283–293 (ENIVCVLNREV) are important for interaction with BIRC2 and BIRC3. The stretch at 299–348 (TAEACSRQHRLDQDKIEALSSKVQQLERSIGLKDLAMADLEQKVLEMEAS) forms a coiled coil. Residue K320 forms a Glycyl lysine isopeptide (Lys-Gly) (interchain with G-Cter in ubiquitin) linkage. Residues 351-496 (DGVFIWKISD…DDAIFIKAIV (146 aa)) form the MATH domain.

This sequence belongs to the TNF receptor-associated factor family. A subfamily. As to quaternary structure, homotrimer. Heterotrimer with TRAF1. Heterotrimer with TRAF3 (via TRAF domain). The domain containing the RING-type and the first TRAF-type zinc finger can also form homodimers (in vitro). Interacts with TNFRSF1B/TNFR2. Interacts with TNFRSF5/CD40. Interacts with TNFRSF4, TNFRSF7/CD27, TNFRSF8/CD30, TNFRSF9/CD137, TNFRSF11A/RANK, TNFRSF13B/TACI, TNFRSF14, TNFRSF16/NGFR, TNFRSF17/BCMA, TNFRSF18/AITR, TNFRSF19/TROY, TNFRSF19L/RELT and EDAR. Stimulation of TNF-alpha receptor TNFRSF1A leads to the formation of two distinct signaling complexes. Plasma membrane-bound complex I is composed of TNFRSF1A, TRADD, RIPK1, TRAF2 and BIRC2/c-IAP1 or BIRC3 which interacts with CHUCK/IKK-alpha, IKBKB/IKK-beta and IKBKG/IKK-gamma promoting cell survival. Subsequently, TRADD, RIPK1 and TRAF2 dissociate from TNFRSF1A and form cytoplasmic complex II with FADD and caspase CASP8 promoting cell apoptosis. Interacts with TRADD. Identified in a complex with TNFRSF1A, RIPK1 and IKBKB/IKK-beta. Interacts with RIPK2. Interacts with BIRC2 and BIRC3 N-terminus; a single BIRC2 or BIRC3 molecule interacts with a heterotrimer formed by TRAF1 and TRAF2, or a TRAF2 homotrimer. Identified in a complex composed of TRAF2, TRAF3, BIRC2 and BIRC3. Interacts with BIRC2; the interaction promotes BIRC2 stability. Interaction with BIRC2 and/or BIRC3 is essential for ubiquitination of IKBKE, degradation of NFKBIA and activation of NF-kappa-B. Within complex I, phosphorylated TRAF2 interacts (via 'Lys-63'-linked polyubiquitin chains) with CHUCK/IKK-alpha, IKBKB/IKK-beta, IKBKG/IKK-gamma TAB2, TAB3 and TAK1 in response to TNF-alpha stimulation. Within complex I, interacts with UXT isoform 1 (via TPQE motif); the interaction prevents the recruitment of FADD and CASP8/caspase 8 to complex I. Forms a complex composed of TNFRSF8/CD30 or TNFRSF1B/TNFR2, and TRAF1, TRAF2 and E3 ligase TRAIP. Within the complex, interacts with TRAIP; the interaction inhibits TRAF2-mediated NF-kappa B activation. Component of a complex composed of TANK and TBK1. Interacts with TRPC4AP. Interacts with MAP3K1/MEKK1, MAP3K5/ASK1 and MAP3K11/MLK3 in response to TNF-alpha stimulation; the interaction leads to JNK activation and interaction with MAP3K5 is inhibited by PRMT1. Component of a complex composed of MAP3K14/NIK BIRC3 and TRAF3; the interaction leads to BIRC2/3-mediated ubiquitination of TRAF3 upon CD40 engagement in a TRAF2-dependent manner. Interacts with MAP3K14/NIK in response to TNF-alpha stimulation; the interaction leads to NF-kappa B activation. Interacts with PEG3; the interaction may promote TRAF2-mediated NF-kappa B activation. Interacts with HIVEP3; the interaction may inhibit TNF-alpha-TRAF2-mediated NF-kappa B and JNK activation. Interacts with TANK/ITRAF; the interaction prevents interaction between TNFRSF1B/TNFR2 and TRAF2. Interacts with deubiquitinating enzyme CYLD; the interaction results in the deubiquitination and inactivation of TRAF2. Interacts with SIAH2; the interaction leads to TRAF2 ubiquitination and degradation. Interacts with E2 conjugating enzyme UBE2N/Ubc13, E3 ligase ITCH and RNF11 in response to TNF-alpha stimulation. Interacts with ubiquitin-editing enzyme TNFAIP3/A20 in response to TNF-alpha stimulation; the interaction promotes TRAF2 dissociation from UBE2N/Ubc13, ITCH, RNF11 and TAX1BP1 and prevents prolonged TRAF-2 ubiquitination. Interacts with TAX1BP1 in response to TNF-alpha stimulation; the interaction promotes TRAF2 dissociation from UBE2N/Ubc13 and TNFAIP3/A20, and prevents prolonged TRAF-2 ubiquitination. Interacts (via C-terminus) with EIF2AK2/PKR (via the kinase catalytic domain). Interacts with deubiquitinating enzyme USP48. Interacts with PTPN2; probably involved in TNF-mediated signaling. Interacts with Toll-like receptor TLR4/3 adapter TICAM1/TRIF; the interaction may promote TICAM1 ubiquitination. Interacts with kinase/endoribonuclease ERN1/IRE1 and DAB2IP in response to ER stress; the interaction requires DAB2IP. Interacts with ERN1/IRE1 and TAOK3 in response to ER stress; the interaction may promote TRAF2 phosphorylation. Interacts (via zinc fingers) with DAB2IP (via C-terminus PER domain)in response to TNF-alpha stimulation. Interacts with CASP8AP2/FLASH. Interacts with NFATC2IP; the interaction may repress IL-4 production in T cells. Interacts with kinase CDK9. Interacts with sphingosine kinase 1 SPHK1. Interacts with kinase TNIK. Interacts with TRAFD1. Interacts with DNA phosphodiesterase TDP2. Interacts with MAVS/IPS1. Interacts with CARD14. Interacts with Epstein-Barr virus LMP1/BNFL1. Interacts with GPS2. Interacts with XPNPEP3. Interacts with RIPK3. Interacts with RELL2. Interacts with LRRC19. Interacts with GAPDH; promoting TRAF2 ubiquitination. Post-translationally, phosphorylated at several serine residues within the first 128 amino acid residues. Phosphorylated at Thr-117 in response to signaling via TNF and TNFRSF1A. Phosphorylation at Thr-117 is required for 'Lys-63'-linked polyubiquitination, but not for 'Lys-48'-linked polyubiquitination. Phosphorylation at Thr-117 is important for interaction with IKKA and IKKB, activation of IKK and subsequent activation of NF-kappa-B. In terms of processing, undergoes both 'Lys-48'-linked and 'Lys-63'-linked polyubiquitination. Polyubiquitinated via 'Lys-63'-linked ubiquitin in response to TNF signaling; this requires prior phosphorylation at Thr-117. 'Lys-63'-linked polyubiquitination promotes TRAF2-mediated activation of NF-kappa-B. Can be polyubiquitinated at several Lys residues via 'Lys-48'-linked ubiquitin chains in response to TNF signaling, leading to proteasomal degradation. Autoubiquitinated, leading to its subsequent proteasomal degradation. Polyubiquitinated by BIRC2 and SIAH2, leading to its subsequent proteasomal degradation. Deubiquitinated by CYLD, a protease that specifically cleaves 'Lys-63'-linked polyubiquitin chains. Ubiquination is inhibited by LRRC19; inhibits proteasomal degradation. Ubiquitinated at Lys-320 by the SCF(FBXL2) complex, leading to its degradation by the proteasome. Ubiquitinated by E3 ubiquitin-protein ligase complex containing FBXO7; leading to repression of NF-kappa-B signaling.

The protein localises to the cytoplasm. It catalyses the reaction S-ubiquitinyl-[E2 ubiquitin-conjugating enzyme]-L-cysteine + [acceptor protein]-L-lysine = [E2 ubiquitin-conjugating enzyme]-L-cysteine + N(6)-ubiquitinyl-[acceptor protein]-L-lysine.. The protein operates within protein modification; protein ubiquitination. Its activity is regulated as follows. Has very low E3 ubiquitin ligase activity in the absence of sphingosine-1-phosphate. E3 ubiquitin ligase activity is strongly activated by cytoplasmic sphingosine-1-phosphate. Functionally, E3 ubiquitin-protein ligase that regulates activation of NF-kappa-B and JNK and plays a central role in the regulation of cell survival and apoptosis. Catalyzes 'Lys-63'-linked ubiquitination of target proteins, such as BIRC3, IKBKE, MLST8, RIPK1 and TICAM1. Is an essential constituent of several E3 ubiquitin-protein ligase complexes, where it promotes the ubiquitination of target proteins by bringing them into contact with other E3 ubiquitin ligases. Regulates BIRC2 and BIRC3 protein levels by inhibiting their autoubiquitination and subsequent degradation; this does not depend on the TRAF2 RING-type zinc finger domain. Plays a role in mediating activation of NF-kappa-B by EIF2AK2/PKR. In complex with BIRC2 or BIRC3, promotes ubiquitination of IKBKE. Acts as a regulator of mTORC1 and mTORC2 assembly by mediating 'Lys-63'-linked ubiquitination of MLST8, thereby inhibiting formation of the mTORC2 complex, while facilitating assembly of the mTORC1 complex. Required for normal antibody isotype switching from IgM to IgG. This chain is TNF receptor-associated factor 2, found in Homo sapiens (Human).